The chain runs to 124 residues: MRVKGTNTTRIRRKKWLKQASGSFGTRKASFKAAKQTVIQASKYAYRDRRQKKREFRSLWILRLNAALRAQGMTYSVFINELKKAKIVINRKVLSELAIKEPNKLNLIINTIKKPTNKPTVAKT.

This sequence belongs to the bacterial ribosomal protein bL20 family.

In terms of biological role, binds directly to 23S ribosomal RNA and is necessary for the in vitro assembly process of the 50S ribosomal subunit. It is not involved in the protein synthesizing functions of that subunit. The chain is Large ribosomal subunit protein bL20 (rplT) from Mycoplasma genitalium (strain ATCC 33530 / DSM 19775 / NCTC 10195 / G37) (Mycoplasmoides genitalium).